Consider the following 86-residue polypeptide: Co-chaperonin GroES (86 aa).

The protein belongs to the GroES chaperonin family. As to quaternary structure, heptamer of 7 subunits arranged in a ring. Interacts with the chaperonin GroEL.

The protein resides in the cytoplasm. Functionally, together with the chaperonin GroEL, plays an essential role in assisting protein folding. The GroEL-GroES system forms a nano-cage that allows encapsulation of the non-native substrate proteins and provides a physical environment optimized to promote and accelerate protein folding. GroES binds to the apical surface of the GroEL ring, thereby capping the opening of the GroEL channel. The sequence is that of Co-chaperonin GroES from Campylobacter jejuni subsp. jejuni serotype O:6 (strain 81116 / NCTC 11828).